We begin with the raw amino-acid sequence, 161 residues long: Nucleotide-binding protein lpg1167 (161 aa).

Belongs to the YajQ family.

Its function is as follows. Nucleotide-binding protein. The sequence is that of Nucleotide-binding protein lpg1167 from Legionella pneumophila subsp. pneumophila (strain Philadelphia 1 / ATCC 33152 / DSM 7513).